The following is a 335-amino-acid chain: Cut9-interacting protein scn1 (335 aa).

It belongs to the metallo-dependent hydrolases superfamily.

Its function is as follows. Interacts with cut9. This chain is Cut9-interacting protein scn1 (scn1), found in Schizosaccharomyces pombe (strain 972 / ATCC 24843) (Fission yeast).